We begin with the raw amino-acid sequence, 326 residues long: Olfactory receptor 11H2 (326 aa).

Residues 1–44 lie on the Extracellular side of the membrane; that stretch reads MCPLTLHVTGLMNVSEPNSSFAFVNEFILQGFSCEWTIQIFLFS. N-linked (GlcNAc...) asparagine glycans are attached at residues asparagine 13 and asparagine 18. Residues 45-65 form a helical membrane-spanning segment; it reads LFTTIYALTITGNGAIAFVLW. Residues 66–72 lie on the Cytoplasmic side of the membrane; it reads CDRRLHT. A helical transmembrane segment spans residues 73 to 93; it reads PMYMFLGNFSFLEIWYVSSTV. The Extracellular portion of the chain corresponds to 94 to 112; it reads PKMLVNFLSEKKNISFAGC. Residue asparagine 106 is glycosylated (N-linked (GlcNAc...) asparagine). A disulfide bridge connects residues cysteine 112 and cysteine 194. Residues 113 to 133 traverse the membrane as a helical segment; it reads FLQFYFFFSLGTSECLLLTVM. The Cytoplasmic segment spans residues 134–158; the sequence is AFDQYLAICRPLLYPNIMTGHLYAK. Residues 159–179 form a helical membrane-spanning segment; sequence LVILCWVCGFLWFLIPIVLIS. The Extracellular segment spans residues 180–216; it reads QKPFCGPNIIDHVVCDPGPLFALDCVSAPRIQLFCYT. Residues 217–237 traverse the membrane as a helical segment; it reads LSSLVIFGNFLFIIGSYTLVL. Topologically, residues 238–259 are cytoplasmic; that stretch reads KAVLGMPSSTGRHKAFSTCGSH. A helical transmembrane segment spans residues 260 to 280; that stretch reads LAVVSLCYSPLMVMYVSPGLG. Residues 281–287 are Extracellular-facing; that stretch reads HSTGMQK. Residues 288-308 form a helical membrane-spanning segment; the sequence is IETLFYAMVTPLFNPLIYSLQ. At 309-326 the chain is on the cytoplasmic side; the sequence is NKEIKAALRKVLGSSNII.

The protein belongs to the G-protein coupled receptor 1 family.

Its subcellular location is the cell membrane. Functionally, odorant receptor. This is Olfactory receptor 11H2 (OR11H2) from Homo sapiens (Human).